The chain runs to 586 residues: MQYHLQVEPHRCAHRTFPSPMTDAVVASEYLDESAKWENFKLDPRLLQAVYQLGFEKPTLIQSNAIPLSLEDKRDIIAKASTGSGKTGAYSIPIIQNILSEGLSEHNIKSVILVPTKELANQVTKFIEKLLVYCNSITQINLATNVSDQVVVSLLSAKPEIIISTPSRLTTVLEKHASIVDLTTVTSLAIDEVDLMLSYGYMEDLQKLDDFLPIKRNLQTYLMSATVNDDVNDLKARFCTKPAIIKLNDNEENQNRLVQFYARTSEFDKFLFAYVIFKLHLIKGKTLAFVNNIDRGYRLKLFLEQFGVRCCILNSELPVNSRLHIVDEFNKNVYNLLIASDESTEVTEQEGEDDQEDSKPEKSKKKKGKKVDGEYGVSRGVDFRNVACVLNFDLPTTSRSYVHRVGRTARAGKAGMALSFVVPVKEVGKHKTATNPGAKRDEKVLARIVKSQSKNGFEIKPYQFDMTQVEGFRYRAEDAFRAVTSAAIREARIRELKNEIMNSEKLKRFFEENPQDLASLRHDKELHPAKVQSQLKRVPDYLLPESARQDPKKIGFVPFHKNKVHKNRKRKGGKKVDALKSFRQKK.

Positions 35–63 match the Q motif motif; sequence AKWENFKLDPRLLQAVYQLGFEKPTLIQS. The region spanning 67–245 is the Helicase ATP-binding domain; the sequence is PLSLEDKRDI…ARFCTKPAII (179 aa). 80-87 is a binding site for ATP; the sequence is ASTGSGKT. The DEAD box signature appears at 191–194; the sequence is DEVD. In terms of domain architecture, Helicase C-terminal spans 274–467; the sequence is YVIFKLHLIK…EIKPYQFDMT (194 aa). Positions 344 to 356 are enriched in acidic residues; it reads TEVTEQEGEDDQE. Disordered regions lie at residues 344 to 372 and 562 to 586; these read TEVT…KKVD and NKVH…RQKK. The span at 562-573 shows a compositional bias: basic residues; that stretch reads NKVHKNRKRKGG.

It belongs to the DEAD box helicase family. DDX56/DBP9 subfamily.

The protein resides in the nucleus. Its subcellular location is the nucleolus. The catalysed reaction is ATP + H2O = ADP + phosphate + H(+). Its function is as follows. ATP-binding RNA helicase involved in the biogenesis of 60S ribosomal subunits and is required for the normal formation of 25S and 5.8S rRNAs. The protein is ATP-dependent RNA helicase DBP9 (DBP9) of Meyerozyma guilliermondii (strain ATCC 6260 / CBS 566 / DSM 6381 / JCM 1539 / NBRC 10279 / NRRL Y-324) (Yeast).